A 291-amino-acid polypeptide reads, in one-letter code: NAD kinase (291 aa).

D73 acts as the Proton acceptor in catalysis. NAD(+)-binding positions include 73–74 (DG), 147–148 (ND), R175, D177, 188–193 (TAYALS), A212, and Q246.

This sequence belongs to the NAD kinase family. A divalent metal cation is required as a cofactor.

It is found in the cytoplasm. The catalysed reaction is NAD(+) + ATP = ADP + NADP(+) + H(+). Functionally, involved in the regulation of the intracellular balance of NAD and NADP, and is a key enzyme in the biosynthesis of NADP. Catalyzes specifically the phosphorylation on 2'-hydroxyl of the adenosine moiety of NAD to yield NADP. The protein is NAD kinase of Polaromonas sp. (strain JS666 / ATCC BAA-500).